The sequence spans 359 residues: Peroxisome assembly protein 12 (359 aa).

Residues methionine 1 to serine 19 lie on the Peroxisomal matrix side of the membrane. A helical transmembrane segment spans residues isoleucine 20–serine 47. Residues asparagine 48–histidine 51 are Cytoplasmic-facing. A helical membrane pass occupies residues tyrosine 52–serine 76. Residues arginine 77 to proline 109 lie on the Peroxisomal matrix side of the membrane. A helical transmembrane segment spans residues lysine 110–glutamate 139. The Cytoplasmic portion of the chain corresponds to glutamate 140–serine 144. A helical transmembrane segment spans residues isoleucine 145–leucine 183. Residues glycine 184–threonine 249 lie on the Peroxisomal matrix side of the membrane. A helical transmembrane segment spans residues glycine 250–threonine 277. Topologically, residues alanine 278–asparagine 359 are cytoplasmic. Residues cysteine 304, cysteine 307, cysteine 325, and cysteine 328 each coordinate Zn(2+). The RING-type; degenerate zinc finger occupies cysteine 304–glycine 343.

This sequence belongs to the pex2/pex10/pex12 family. As to quaternary structure, component of the PEX2-PEX10-PEX12 retrotranslocation channel, composed of PEX2, PEX10 and PEX12. Interacts with PEX19 via its cytoplasmic domain.

Its subcellular location is the peroxisome membrane. It functions in the pathway protein modification; protein ubiquitination. In terms of biological role, component of a retrotranslocation channel required for peroxisome organization by mediating export of the PEX5 receptor from peroxisomes to the cytosol, thereby promoting PEX5 recycling. The retrotranslocation channel is composed of PEX2, PEX10 and PEX12; each subunit contributing transmembrane segments that coassemble into an open channel that specifically allows the passage of PEX5 through the peroxisomal membrane. PEX12 also regulates PEX5 recycling by activating the E3 ubiquitin-protein ligase activity of PEX10. When PEX5 recycling is compromised, PEX12 stimulates PEX10-mediated polyubiquitination of PEX5, leading to its subsequent degradation. The sequence is that of Peroxisome assembly protein 12 (Pex12) from Rattus norvegicus (Rat).